The following is a 306-amino-acid chain: Porphobilinogen deaminase (306 aa).

Residue Cys-240 is modified to S-(dipyrrolylmethanemethyl)cysteine.

The protein belongs to the HMBS family. As to quaternary structure, monomer. Dipyrromethane is required as a cofactor.

It carries out the reaction 4 porphobilinogen + H2O = hydroxymethylbilane + 4 NH4(+). It functions in the pathway porphyrin-containing compound metabolism; protoporphyrin-IX biosynthesis; coproporphyrinogen-III from 5-aminolevulinate: step 2/4. Its function is as follows. Tetrapolymerization of the monopyrrole PBG into the hydroxymethylbilane pre-uroporphyrinogen in several discrete steps. The sequence is that of Porphobilinogen deaminase from Syntrophomonas wolfei subsp. wolfei (strain DSM 2245B / Goettingen).